Consider the following 447-residue polypeptide: MEKNAEKKRIVLVPFPLQGHITPMMQLGQALNLKGFSITVALGDSNRVSSTQHFPGFQFVTIPETIPLSQHEALGVVEFVVTLNKTSETSFKDCIAHLLLQHGNDIACIIYDELMYFSEATAKDLRIPSVIFTTGSATNHVCSCILSKLNAEKFLIDMKDPEVQNMVVENLHPLKYKDLPTSGMGPLERFLEICAEVVNKRTASAVIINTSSCLESSSLSWLKQELSIPVYPLGPLHITTSANFSLLEEDRSCIEWLNKQKLRSVIYISVGSIAHMETKEVLEMAWGLYNSNQPFLWVIRPGTESMPVEVSKIVSERGCIVKWAPQNEVLVHPAVGGFWSHCGWNSTLESIVEGVPMICRPFNGEQKLNAMYIESVWRVGVLLQGEVERGCVERAVKRLIVDDEGVGMRERALVLKEKLNASVRSGGSSYNALDELVHYLEAEYRNT.

Residues serine 272, 324-326 (APQ), 341-349 (HCGWNSTLE), and 363-366 (NGEQ) each bind UDP-alpha-D-glucose.

This sequence belongs to the UDP-glycosyltransferase family.

In Arabidopsis thaliana (Mouse-ear cress), this protein is UDP-glycosyltransferase 76E5 (UGT76E5).